Consider the following 458-residue polypeptide: Argininosuccinate lyase (458 aa).

This sequence belongs to the lyase 1 family. Argininosuccinate lyase subfamily.

The protein localises to the cytoplasm. It catalyses the reaction 2-(N(omega)-L-arginino)succinate = fumarate + L-arginine. It participates in amino-acid biosynthesis; L-arginine biosynthesis; L-arginine from L-ornithine and carbamoyl phosphate: step 3/3. This Salmonella agona (strain SL483) protein is Argininosuccinate lyase.